An 89-amino-acid chain; its full sequence is Elongation factor 1-beta (89 aa).

The protein belongs to the EF-1-beta/EF-1-delta family.

In terms of biological role, promotes the exchange of GDP for GTP in EF-1-alpha/GDP, thus allowing the regeneration of EF-1-alpha/GTP that could then be used to form the ternary complex EF-1-alpha/GTP/AAtRNA. The chain is Elongation factor 1-beta from Methanococcus vannielii (strain ATCC 35089 / DSM 1224 / JCM 13029 / OCM 148 / SB).